The primary structure comprises 341 residues: Methionine import ATP-binding protein MetN 1 (341 aa).

The 240-residue stretch at 2-241 (IEFKNVNKVF…PQTNTAKNFV (240 aa)) folds into the ABC transporter domain. ATP is bound at residue 38–45 (GYSGAGKS).

The protein belongs to the ABC transporter superfamily. Methionine importer (TC 3.A.1.24) family. The complex is composed of two ATP-binding proteins (MetN), two transmembrane proteins (MetI) and a solute-binding protein (MetQ).

The protein resides in the cell membrane. The catalysed reaction is L-methionine(out) + ATP + H2O = L-methionine(in) + ADP + phosphate + H(+). It catalyses the reaction D-methionine(out) + ATP + H2O = D-methionine(in) + ADP + phosphate + H(+). Its function is as follows. Part of the ABC transporter complex MetNIQ involved in methionine import. Responsible for energy coupling to the transport system. The chain is Methionine import ATP-binding protein MetN 1 from Staphylococcus epidermidis (strain ATCC 35984 / DSM 28319 / BCRC 17069 / CCUG 31568 / BM 3577 / RP62A).